The sequence spans 348 residues: MCEGPSRISGPIPPDPTLCPDYYRRPSSAQGRLEGNALKLDLLTPDTDRDLDATPPRAPRIRPGGLEILERGRRGVGGVLLQLGGISLGPGASPKRKDPKDHEKENMRRIREIQRRFREQEHSREQGQSRPLKALWRSPKYDKVESRVKAQLQEPGPASGTEPAHFLRAHSRCGPGLPPPRVPSPQLTLPGPSAKAPGPGVDFITHNARTAKRAPRRHSRSLQVLAQVLEQQQQAQEHYNATQKGHVPQYLLERRDLWRREAEARQHSQPDPAMPPGHTRMPENQRLETLSSLLQSQSQLLRELVLLPAGADSLRAQSHRAELDRKLVQVEEAIKIFSRPKVFVKMDS.

3 disordered regions span residues 1–65 (MCEG…RPGG), 84–195 (GGIS…PSAK), and 262–282 (AEAR…TRMP). Ser93 is subject to Phosphoserine. Over residues 95 to 127 (KRKDPKDHEKENMRRIREIQRRFREQEHSREQG) the composition is skewed to basic and acidic residues. Ser138 carries the post-translational modification Phosphoserine. A compositionally biased stretch (basic and acidic residues) spans 139 to 148 (PKYDKVESRV). An Enkurin domain is found at 253-345 (ERRDLWRREA…IFSRPKVFVK (93 aa)).

As to quaternary structure, interacts with alpha-tubulin. Interacts (via central region) with CCP110 (via N-terminal region); competes with CEP97 for binding to CCP110.

The protein localises to the cytoplasm. It is found in the cytoskeleton. Its subcellular location is the microtubule organizing center. The protein resides in the centrosome. It localises to the centriole. The protein localises to the cilium basal body. It is found in the cell projection. Its subcellular location is the cilium. The protein resides in the spindle. It localises to the spindle pole. The protein localises to the cilium axoneme. In terms of biological role, microtubule-binding protein which regulates microtubule organization and stability. Promotes the stability of astral microtubules and facilitates the proper orientation of the mitotic spindle. This allows the oriented division of basal keratinocytes and contributes to epidermal stratification. Required for the assembly of both primary and motile cilia. Destabilizes the interaction between CCP110 and CEP97 by competing with CEP97 for binding to CCP110 which promotes the removal of CCP110 and CEP97 from the mother centriole and allows the initiation of ciliogenesis. In Bos taurus (Bovine), this protein is Enkurin domain-containing protein 1 (ENKD1).